The following is a 153-amino-acid chain: Probable disulfide formation protein (153 aa).

The chain crosses the membrane as a helical span at residues 4–23 (DTRLYLAWLVALAATLGSLY). A disulfide bridge links Cys-33 with Cys-36. The next 2 membrane-spanning stretches (helical) occupy residues 38-57 (AQRIFMYPLAVILGIAAFVG) and 64-81 (YVLPLAALGLGFAIFQNL). A disulfide bond links Cys-93 and Cys-101. A helical membrane pass occupies residues 117-139 (RALTIPVLSMIAFALILALLSWP).

Belongs to the DsbB family. BdbC subfamily.

It is found in the cell membrane. Its function is as follows. Required for disulfide bond formation in some proteins. This Deinococcus radiodurans (strain ATCC 13939 / DSM 20539 / JCM 16871 / CCUG 27074 / LMG 4051 / NBRC 15346 / NCIMB 9279 / VKM B-1422 / R1) protein is Probable disulfide formation protein.